The following is a 3165-amino-acid chain: Protein eyes shut homolog (3165 aa).

The N-terminal stretch at 1-21 (MTDKSIVILSLMVFHSSFING) is a signal peptide. Asn166 is a glycosylation site (N-linked (GlcNAc...) asparagine). EGF-like domains lie at 170–212 (KQQF…KYCQ), 213–254 (ELDA…KNCS), and 256–292 (IIGQ…PFCE). 9 disulfides stabilise this stretch: Cys174–Cys189, Cys183–Cys200, Cys202–Cys211, Cys217–Cys228, Cys222–Cys242, Cys244–Cys253, Cys260–Cys270, Cys265–Cys280, and Cys282–Cys291. Asn269 and Asn272 each carry an N-linked (GlcNAc...) asparagine glycan. N-linked (GlcNAc...) asparagine glycosylation is found at Asn311 and Asn343. 2 consecutive EGF-like domains span residues 332 to 368 (DVSE…LLCK) and 370 to 406 (IQTS…KNCE). Intrachain disulfides connect Cys341–Cys356, Cys358–Cys367, Cys374–Cys385, and Cys396–Cys405. N-linked (GlcNAc...) asparagine glycans are attached at residues Asn506 and Asn566. 2 consecutive EGF-like domains span residues 567–602 (TTDD…RLCV) and 643–679 (DTED…TQCE). 46 cysteine pairs are disulfide-bonded: Cys575–Cys590, Cys592–Cys601, Cys669–Cys678, Cys685–Cys696, Cys690–Cys705, Cys707–Cys719, Cys737–Cys748, Cys742–Cys757, Cys759–Cys768, Cys775–Cys786, Cys780–Cys795, Cys797–Cys806, Cys813–Cys824, Cys818–Cys835, Cys837–Cys846, Cys853–Cys866, Cys860–Cys876, Cys878–Cys887, Cys894–Cys905, Cys899–Cys914, Cys916–Cys925, Cys932–Cys943, Cys937–Cys952, Cys954–Cys963, Cys970–Cys981, Cys975–Cys990, Cys992–Cys1001, Cys1008–Cys1019, Cys1013–Cys1028, Cys1030–Cys1039, Cys1046–Cys1056, Cys1051–Cys1065, Cys1067–Cys1076, Cys1083–Cys1094, Cys1088–Cys1103, Cys1105–Cys1114, Cys1121–Cys1137, Cys1131–Cys1147, Cys1149–Cys1158, Cys1165–Cys1176, Cys1170–Cys1185, Cys1187–Cys1196, Cys2037–Cys2063, Cys2103–Cys2114, Cys2108–Cys2128, and Cys2130–Cys2139. The region spanning 681–720 (DIDECASHPCKNGATCIDQPGNYFCQCVPPFKVVDGFSCL) is the EGF-like 8; calcium-binding domain. The region spanning 733-769 (DIDDCILNACEHNSTCKDLHLSYQCVCLSDWEGNFCE) is the EGF-like 9; calcium-binding domain. One can recognise an EGF-like 10; calcium-binding domain in the interval 771 to 807 (ESNECKMNPCKNNSTCTDLYKSYRCECTSGWTGQNCS). EGF-like domains are found at residues 809–847 (EINE…QFCH), 849–888 (RYNL…KNCE), and 890–926 (DVKD…SLCE). An EGF-like 14; calcium-binding domain is found at 928–964 (EINECSSEPCKNNGTCVDLTNRFFCNCEPEYHGPFCE). Residues 966–1002 (DVNKCKISPCLDEENCVYRTDGYNCLCAPGYTGINCE) form the EGF-like 15 domain. The EGF-like 16; calcium-binding domain occupies 1004–1040 (NLDECLSEPCLHDGVCIDGINHYTCDCKSGFFGTHCE). EGF-like domains are found at residues 1042–1077 (NAND…TQCK), 1079–1115 (KIND…AYCE), and 1117–1159 (SIDN…QFCE). The 37-residue stretch at 1161–1197 (NINECSSSPCLHGADCEDHINGYVCKCQPGWSGHHCE) folds into the EGF-like 20; calcium-binding domain. Residues 1883–2063 (FSCVRYYGDS…AVKNYHINNC (181 aa)) enclose the Laminin G-like 1 domain. Residues 2099–2140 (APSVCQQDVCHNGGTCHAIFLSSGIVSFQCDCPLHFTGRFCE) form the EGF-like 21 domain. Residues 2145 to 2339 (LFFPSFNGNS…NIENCHVPWC (195 aa)) form the Laminin G-like 2 domain. Asn2170 carries an N-linked (GlcNAc...) asparagine glycan. 2 consecutive EGF-like domains span residues 2335–2368 (HVPW…YSGK) and 2371–2408 (QFAS…PLCT). Disulfide bonds link Cys2339/Cys2350, Cys2344/Cys2359, Cys2375/Cys2386, Cys2380/Cys2396, Cys2398/Cys2407, Cys2576/Cys2609, Cys2614/Cys2625, Cys2619/Cys2634, Cys2636/Cys2645, Cys2652/Cys2668, Cys2662/Cys2677, Cys2679/Cys2688, Cys2868/Cys2895, Cys2900/Cys2911, Cys2905/Cys2920, Cys2922/Cys2931, Cys2937/Cys2948, Cys2942/Cys2958, and Cys2960/Cys2969. In terms of domain architecture, Laminin G-like 3 spans 2419–2609 (SGTDAFGYTS…PNAGRSVGQC (191 aa)). 2 EGF-like domains span residues 2610 to 2646 (HASP…SFCT) and 2648 to 2689 (TVST…IYCE). The 179-residue stretch at 2717 to 2895 (DPSFRSNELS…AKGGSNVGDC (179 aa)) folds into the Laminin G-like 4 domain. 2 consecutive EGF-like domains span residues 2896–2932 (DGTA…NTCN) and 2933–2970 (QSVS…RYCE). The Laminin G-like 5 domain maps to 2975–3165 (FSTAKFMGNS…YDGDEQNEVT (191 aa)).

This sequence belongs to the EYS family. As to expression, expressed in retina (at protein level). Isoform 1: Detected in retina. Isoform 2: Detected in retina. Isoform 3: Strongly expressed in retina and testis. Isoform 4: Strongly expressed in testis, and weakly expressed in retina.

It localises to the cell projection. It is found in the cilium. Its subcellular location is the photoreceptor outer segment. The protein localises to the cytoplasm. The protein resides in the cytoskeleton. It localises to the cilium axoneme. It is found in the microtubule organizing center. Its subcellular location is the centrosome. The protein localises to the secreted. The protein resides in the extracellular space. It localises to the extracellular matrix. It is found in the interphotoreceptor matrix. In terms of biological role, required to maintain the integrity of photoreceptor cells. Specifically required for normal morphology of the photoreceptor ciliary pocket, and might thus facilitate protein trafficking between the photoreceptor inner and outer segments via the transition zone. This Homo sapiens (Human) protein is Protein eyes shut homolog (EYS).